The following is a 120-amino-acid chain: Glycine cleavage system H protein (120 aa).

The 83-residue stretch at 17–99 (VATVGITTYA…QGAGWFFKLK (83 aa)) folds into the Lipoyl-binding domain. N6-lipoyllysine is present on K58.

The protein belongs to the GcvH family. The glycine cleavage system is composed of four proteins: P, T, L and H. It depends on (R)-lipoate as a cofactor.

The glycine cleavage system catalyzes the degradation of glycine. The H protein shuttles the methylamine group of glycine from the P protein to the T protein. This chain is Glycine cleavage system H protein, found in Rhizobium etli (strain CIAT 652).